Reading from the N-terminus, the 298-residue chain is ATP synthase gamma chain (298 aa).

It belongs to the ATPase gamma chain family. As to quaternary structure, F-type ATPases have 2 components, CF(1) - the catalytic core - and CF(0) - the membrane proton channel. CF(1) has five subunits: alpha(3), beta(3), gamma(1), delta(1), epsilon(1). CF(0) has three main subunits: a, b and c.

The protein localises to the cell inner membrane. In terms of biological role, produces ATP from ADP in the presence of a proton gradient across the membrane. The gamma chain is believed to be important in regulating ATPase activity and the flow of protons through the CF(0) complex. This Francisella tularensis subsp. holarctica (strain FTNF002-00 / FTA) protein is ATP synthase gamma chain.